The chain runs to 82 residues: Hepcidin (82 aa).

The signal sequence occupies residues Met1 to Gly23. Positions Ser24–Gln53 are excised as a propeptide. Intrachain disulfides connect Cys64–Cys80, Cys67–Cys70, Cys68–Cys76, and Cys71–Cys79.

It belongs to the hepcidin family. As to quaternary structure, interacts with SLC40A1; this interaction promotes SLC40A1 rapid ubiquitination.

The protein resides in the secreted. Its function is as follows. Liver-produced hormone that constitutes the main circulating regulator of iron absorption and distribution across tissues. Acts by promoting endocytosis and degradation of ferroportin/SLC40A1, leading to the retention of iron in iron-exporting cells and decreased flow of iron into plasma. Controls the major flows of iron into plasma: absorption of dietary iron in the intestine, recycling of iron by macrophages, which phagocytose old erythrocytes and other cells, and mobilization of stored iron from hepatocytes. Has strong antimicrobial activity against E.coli ML35P N.cinerea and weaker against S.epidermidis, S.aureus and group b streptococcus bacteria. Active against the fungus C.albicans. No activity against P.aeruginosa. This is Hepcidin (HAMP) from Sus scrofa (Pig).